We begin with the raw amino-acid sequence, 546 residues long: MSLPKAQILVVVTVGGSTNSAPILEICSILAARGHTIDFATLSGRQKLVDNYPFVKKVHIVGPAISAEEDEKHYILFSRWNWNTARGKRDIVKGKMAFDAFWPFTYRGLKEVITTTKPDFIFSDFHVEAALDVCNEFRLPHAVMWPQMPWLMMPQKYIPGQPGMQQRCLTSEHASIYDRLFEMTFLLRSAPFFLHWIFWTKAMRRKEGVAPRPRHSKPDYLVFMNNFYGMETPRDTPPLVHPVGPILADSYPALDGDIKSFVETHQKIALVAFGTHVILDDGKIFKIIDGLADAISSGVIDGVVWALSARSRGQLDTSIRVPSLHLSHLTIDQLFKNQDQAWHFATWVPQRSVLEHDSTIIFVTHAGPSSVNESIFHGVPMVAMGIFGDQMVTTLRLERSGVAVRLDKETFDAASLTTAIRTILLFDKESFQRNVKRMKRIAMVGSRKKHFAANVIEEHLYDWDGRFENSILDLKACSNRKRGFLQASNSKDMYPRGKELRPMHLQTPDVRMSWIKLNNIDVALLFFILLGIISWITRAAANMVRL.

The first 20 residues, 1-20, serve as a signal peptide directing secretion; it reads MSLPKAQILVVVTVGGSTNS. Residues 517–537 traverse the membrane as a helical segment; it reads LNNIDVALLFFILLGIISWIT.

Belongs to the glycosyltransferase 28 family.

It is found in the membrane. Its pathway is secondary metabolite biosynthesis. In terms of biological role, UDP-glycosyltransferase; part of the gene cluster that mediates the biosynthesis of the gamma-pyrones fusapyrone (FPY) and deoxyfusapyrone (dFPY). FPY is an undecaketide and thus likely synthesized by the polyketide synthase FPY1 from acetyl-CoA functioning as starter unit and the addition of 10 malonyl-CoA extender units by successive Claisen-condensations. Next to this, FPY shares some rare features: C-glycosylated 4-deoxyglucose at C-3, a gem-dimethyl group at C-13, and an alpha-beta to beta-gamma double bond shift at C-20. During FPY biosynthesis mono-C-methyl groups are transferred to the tetra-, penta-, hexa- and heptaketide, while two C-methyl groups are transferred to the nonaketide, suggesting that the CMet domain is programmed to selectively catalyze two successive C-alpha-methylation reactions of the nonaketide, while other alpha-carbons are non- or mono-methylated only. While the origin of the 4'-deoxyglucose moiety remains opaque, its transfer to C-3 is most likely mediated by the C-glycosyltransferase FPY2. Next to this, the hydroxyl group present at C-33 and discriminating between FPY and dFPY, is likely to be installed by the cytochrome P450 monooxygenase FPY7. No putative function can be predicted for the remaining genes FPY3-FPY6. This is UDP-glycosyltransferase FPY2 from Fusarium mangiferae (Mango malformation disease fungus).